The primary structure comprises 831 residues: Periplasmic nitrate reductase (831 aa).

The tat-type signal signal peptide spans 1–38 (MSMARRDFIKQTAAAAAATVAGVPLTGYTQNIVTESEA). A 4Fe-4S Mo/W bis-MGD-type domain is found at 41 to 97 (LKWSKAPCRFCGTGCGVNVAVKDNQVVATHGDFNAEVNKGLNCVKGYFLSKIMYGSD). Positions 48, 51, 55, and 83 each coordinate [4Fe-4S] cluster. Residues Lys85, Gln152, Asn177, Cys181, 214–221 (WGSNMAEM), 245–249 (STFEH), 264–266 (QSD), Met375, Gln379, Asn485, 511–512 (SD), Lys534, Asp561, and 721–730 (TGRVLEHWHS) each bind Mo-bis(molybdopterin guanine dinucleotide). Trp797 is a binding site for substrate. Asn805 and Lys822 together coordinate Mo-bis(molybdopterin guanine dinucleotide).

It belongs to the prokaryotic molybdopterin-containing oxidoreductase family. NasA/NapA/NarB subfamily. As to quaternary structure, component of the periplasmic nitrate reductase NapAB complex composed of NapA and NapB. [4Fe-4S] cluster is required as a cofactor. The cofactor is Mo-bis(molybdopterin guanine dinucleotide). Predicted to be exported by the Tat system. The position of the signal peptide cleavage has not been experimentally proven.

The protein localises to the periplasm. It carries out the reaction 2 Fe(II)-[cytochrome] + nitrate + 2 H(+) = 2 Fe(III)-[cytochrome] + nitrite + H2O. Functionally, catalytic subunit of the periplasmic nitrate reductase complex NapAB. Receives electrons from NapB and catalyzes the reduction of nitrate to nitrite. This chain is Periplasmic nitrate reductase, found in Bordetella parapertussis (strain 12822 / ATCC BAA-587 / NCTC 13253).